A 487-amino-acid polypeptide reads, in one-letter code: Glycogen synthase (487 aa).

Residue Lys20 participates in ADP-alpha-D-glucose binding.

Belongs to the glycosyltransferase 1 family. Bacterial/plant glycogen synthase subfamily.

The enzyme catalyses [(1-&gt;4)-alpha-D-glucosyl](n) + ADP-alpha-D-glucose = [(1-&gt;4)-alpha-D-glucosyl](n+1) + ADP + H(+). It functions in the pathway glycan biosynthesis; glycogen biosynthesis. In terms of biological role, synthesizes alpha-1,4-glucan chains using ADP-glucose. This Aliivibrio fischeri (strain MJ11) (Vibrio fischeri) protein is Glycogen synthase.